The primary structure comprises 427 residues: Hydroxylamine reductase (427 aa).

4 residues coordinate [4Fe-4S] cluster: cysteine 3, cysteine 6, cysteine 15, and cysteine 21. Positions 129, 153, 197, 283, 311, 336, 370, and 372 each coordinate hybrid [4Fe-2O-2S] cluster. Cysteine 283 bears the Cysteine persulfide mark.

Belongs to the HCP family. Requires [4Fe-4S] cluster as cofactor. Hybrid [4Fe-2O-2S] cluster is required as a cofactor.

Its subcellular location is the cytoplasm. The catalysed reaction is A + NH4(+) + H2O = hydroxylamine + AH2 + H(+). Its function is as follows. Catalyzes the reduction of hydroxylamine to form NH(3) and H(2)O. This Moorella thermoacetica (strain ATCC 39073 / JCM 9320) protein is Hydroxylamine reductase.